Consider the following 418-residue polypeptide: Serine hydroxymethyltransferase (418 aa).

Residues Leu-120 and 124-126 (GHL) contribute to the (6S)-5,6,7,8-tetrahydrofolate site. Lys-229 bears the N6-(pyridoxal phosphate)lysine mark. 353 to 355 (SPF) provides a ligand contact to (6S)-5,6,7,8-tetrahydrofolate.

Belongs to the SHMT family. In terms of assembly, homodimer. It depends on pyridoxal 5'-phosphate as a cofactor.

It localises to the cytoplasm. It catalyses the reaction (6R)-5,10-methylene-5,6,7,8-tetrahydrofolate + glycine + H2O = (6S)-5,6,7,8-tetrahydrofolate + L-serine. It participates in one-carbon metabolism; tetrahydrofolate interconversion. The protein operates within amino-acid biosynthesis; glycine biosynthesis; glycine from L-serine: step 1/1. Functionally, catalyzes the reversible interconversion of serine and glycine with tetrahydrofolate (THF) serving as the one-carbon carrier. This reaction serves as the major source of one-carbon groups required for the biosynthesis of purines, thymidylate, methionine, and other important biomolecules. Also exhibits THF-independent aldolase activity toward beta-hydroxyamino acids, producing glycine and aldehydes, via a retro-aldol mechanism. In Psychrobacter sp. (strain PRwf-1), this protein is Serine hydroxymethyltransferase.